The chain runs to 436 residues: Serine protease inhibitor A6 (436 aa).

A signal peptide spans 1–16; it reads MHLLVYLSLFFALALA. Residues 26–60 are disordered; sequence KHRHRHEQQGHHDSAKHGHQKDKQQQEQIKNDEGK. Residues 32 to 60 are compositionally biased toward basic and acidic residues; sequence EQQGHHDSAKHGHQKDKQQQEQIKNDEGK. N-linked (GlcNAc...) asparagine glycans are attached at residues N260 and N289.

Belongs to the serpin family. As to expression, liver.

The protein resides in the secreted. It is found in the extracellular space. Its function is as follows. Not yet known. This is Serine protease inhibitor A6 (serpina6) from Xenopus laevis (African clawed frog).